The primary structure comprises 137 residues: Large ribosomal subunit protein uL16 (137 aa).

It belongs to the universal ribosomal protein uL16 family. In terms of assembly, part of the 50S ribosomal subunit.

Its function is as follows. Binds 23S rRNA and is also seen to make contacts with the A and possibly P site tRNAs. This Streptococcus thermophilus (strain ATCC BAA-491 / LMD-9) protein is Large ribosomal subunit protein uL16.